The chain runs to 845 residues: MRLENREGRPTSGVLEMELPQASAPSRAGLGSLGLVGLDSSNHRPQQGGSKAGSRGPYLSGAAGQSCWVPMDQDFGPFLTERRSHCPFPKHFSSRSKDPCFTENTPLLGSFSQEEGSRCIPVYRPEFITADEPWENSSAEWEGGALLSTELAVSSGSASTEKGELLDSAHIRCHLSKLRCCVQWLKVSGLFVFVVLCSILFSLYPDQGKFWQLLAVSPLESYSVNLSSHADSMLLQVDLAGALVASGPSHLGKEEHVAVEVTQANAPGSRRRRPQQVTHNWTIFLNPSGGEHTVMSRTFEVLSREPVSINIRASLQQTQIVPLLMAHQYLRASIEAQVTIAAVILAGVYVLIIFEIVHRTLAAMLGSLAALAALAVIGDRPTLTQVVEWIDFETLALLFGMMILVAIFSETGFFDYCAVKAYQLSRGRVWAMIIMLCLIAAVLSAFLDNVTTALLFTPVTIRLCEVLNLDPRQVLIAEVIFTNIGGAATAIGDPPNVIIVSNQELRKMGLDFAGFTAHMFAGICFVLLFSFPLLRLLYWNRKLYNKEPSEIVELKHEIHVWRLTAQRISPASREETAVRGLLLEKVLSLERLLARRLHSFHRQISQEDKNWETNIQELQKKHRISDRTLLTKCVTVLGLVIFMFFLNSFVPGVHLDLGWIAILGAIWLLILADIHDFEIILHRVEWATLLFFAALFILMEALAHLHLIEYVGEQTALLIKMVPEDQRLAAAIIVVVWVSAIASSLIDNIPFTATMIPVLLNLSRDPEISLPAPPLMYALALGACLGGNGTLIGASANVVCAGIAEQHGYGFSFMEFFRLGFPMMVVSCMVGMCYLLVAHVVMGWN.

Positions Met-1–Pro-57 are disordered. Over Met-1 to Gln-183 the chain is Extracellular. Over residues Ser-26 to Ser-40 the composition is skewed to low complexity. A helical transmembrane segment spans residues Trp-184–Tyr-204. Residues Pro-205–Gln-337 lie on the Cytoplasmic side of the membrane. The helical transmembrane segment at Val-338–His-358 threads the bilayer. The Extracellular segment spans residues Arg-359 to Thr-360. Residues Leu-361–Pro-381 traverse the membrane as a helical segment. Topologically, residues Thr-382–Glu-393 are cytoplasmic. Residues Thr-394–Phe-414 traverse the membrane as a helical segment. Residues Asp-415–Val-429 lie on the Extracellular side of the membrane. The chain crosses the membrane as a helical span at residues Trp-430 to Val-450. Residues Thr-451–Ala-513 lie on the Cytoplasmic side of the membrane. Residues Gly-514–Leu-534 traverse the membrane as a helical segment. The Extracellular segment spans residues Arg-535 to Leu-629. A helical transmembrane segment spans residues Leu-630–Val-650. Residue Pro-651 is a topological domain, cytoplasmic. A helical membrane pass occupies residues Gly-652 to Ala-672. Residues Asp-673–Ala-687 lie on the Extracellular side of the membrane. A helical membrane pass occupies residues Thr-688–Ile-708. At Glu-709–Ala-730 the chain is on the cytoplasmic side. Residues Ala-731–Phe-751 traverse the membrane as a helical segment. At Thr-752–Pro-773 the chain is on the extracellular side. The helical transmembrane segment at Pro-774–Ala-794 threads the bilayer. Over Ser-795–Gly-820 the chain is Cytoplasmic. A helical membrane pass occupies residues Phe-821–Val-841. Residues Met-842–Asn-845 are Extracellular-facing.

It belongs to the CitM (TC 2.A.11) transporter family.

The protein localises to the melanosome membrane. It carries out the reaction chloride(in) = chloride(out). Functionally, contributes to a melanosome-specific anion (chloride) current that modulates melanosomal pH for optimal tyrosinase activity required for melanogenesis and the melanosome maturation. One of the components of the mammalian pigmentary system. May serve as a key control point at which ethnic skin color variation is determined. Major determinant of brown and/or blue eye color. Seems to regulate the post-translational processing of tyrosinase, which catalyzes the limiting reaction in melanin synthesis. This is P protein (Oca2) from Sus scrofa (Pig).